Consider the following 378-residue polypeptide: Beta sliding clamp (378 aa).

Belongs to the beta sliding clamp family. Forms a ring-shaped head-to-tail homodimer around DNA which binds and tethers DNA polymerases and other proteins to the DNA. The DNA replisome complex has a single clamp-loading complex (3 tau and 1 each of delta, delta', psi and chi subunits) which binds 3 Pol III cores (1 core on the leading strand and 2 on the lagging strand) each with a beta sliding clamp dimer. Additional proteins in the replisome are other copies of gamma, psi and chi, Ssb, DNA helicase and RNA primase.

It localises to the cytoplasm. Its function is as follows. Confers DNA tethering and processivity to DNA polymerases and other proteins. Acts as a clamp, forming a ring around DNA (a reaction catalyzed by the clamp-loading complex) which diffuses in an ATP-independent manner freely and bidirectionally along dsDNA. Initially characterized for its ability to contact the catalytic subunit of DNA polymerase III (Pol III), a complex, multichain enzyme responsible for most of the replicative synthesis in bacteria; Pol III exhibits 3'-5' exonuclease proofreading activity. The beta chain is required for initiation of replication as well as for processivity of DNA replication. In Streptococcus pneumoniae serotype 4 (strain ATCC BAA-334 / TIGR4), this protein is Beta sliding clamp (dnaN).